A 206-amino-acid chain; its full sequence is Probable N-acetyltransferase 14 (206 aa).

The 201-residue stretch at 6–206 folds into the N-acetyltransferase domain; the sequence is LSVREMREDE…MLVREFSKDL (201 aa). A helical transmembrane segment spans residues 57 to 77; the sequence is FILASFALALLLPVFLAVAAV.

This sequence belongs to the camello family.

The protein resides in the membrane. In terms of biological role, probable acetyltransferase that binds the 5'-GGACTACAG-3' sequence of coproporphyrinogen oxidase promoter. Able to activate transcription of a reporter construct in vitro. Its function is as follows. Probable acetyltransferase. Functionally, may act as a transcription factor regulating the expression of coproporphyrinogen oxidase by binding to a promoter regulatory element. The polypeptide is Probable N-acetyltransferase 14 (Nat14) (Mus musculus (Mouse)).